We begin with the raw amino-acid sequence, 321 residues long: Methenyltetrahydromethanopterin cyclohydrolase (321 aa).

Belongs to the MCH family.

The protein resides in the cytoplasm. The enzyme catalyses 5,10-methenyl-5,6,7,8-tetrahydromethanopterin + H2O = N(5)-formyl-5,6,7,8-tetrahydromethanopterin + H(+). It functions in the pathway one-carbon metabolism; methanogenesis from CO(2); 5,10-methenyl-5,6,7,8-tetrahydromethanopterin from CO(2): step 3/3. Functionally, catalyzes the reversible interconversion of 5-formyl-H(4)MPT to methenyl-H(4)MPT(+). The protein is Methenyltetrahydromethanopterin cyclohydrolase of Methanosarcina mazei (strain ATCC BAA-159 / DSM 3647 / Goe1 / Go1 / JCM 11833 / OCM 88) (Methanosarcina frisia).